An 802-amino-acid polypeptide reads, in one-letter code: Threonine--tRNA ligase 2, cytoplasmic (802 aa).

A2 carries the N-acetylalanine modification. Coiled coils occupy residues 3 to 23 (AEAL…EDIR) and 76 to 96 (AEER…AQEA). A compositionally biased stretch (low complexity) spans 86-98 (ESAELEAAQEAGA). The disordered stretch occupies residues 86–123 (ESAELEAAQEAGAQPPPSQSQDKDMKKKKMKESEADSE). Basic and acidic residues predominate over residues 106–123 (QDKDMKKKKMKESEADSE). Residues 157–222 (DTSNIITVRV…EGDSSLELLT (66 aa)) form the TGS domain. Residue S453 is modified to Phosphoserine. The Nuclear localization signal motif lies at 786-792 (KLKNLRK).

The protein belongs to the class-II aminoacyl-tRNA synthetase family. May be a component of the multisynthetase complex (MSC), a large multi-subunit complex which contains at least eight different aminoacyl-tRNA synthetases plus three auxillary subunits AIMP1, AIMP2 and EEF1E1. Interacts with the MSC components EPRS1, AIMP1, AIMP2 and KARS1.

It is found in the cytoplasm. The protein resides in the nucleus. It carries out the reaction tRNA(Thr) + L-threonine + ATP = L-threonyl-tRNA(Thr) + AMP + diphosphate + H(+). Its function is as follows. Catalyzes the attachment of threonine to tRNA(Thr) in a two-step reaction: threonine is first activated by ATP to form Thr-AMP and then transferred to the acceptor end of tRNA(Thr). Also edits incorrectly charged tRNA(Thr) via its editing domain, at the post-transfer stage. The polypeptide is Threonine--tRNA ligase 2, cytoplasmic (Homo sapiens (Human)).